Here is a 110-residue protein sequence, read N- to C-terminus: Probable ribonuclease HepT (110 aa).

Active-site residues include R75 and H80. The short motif at 75–82 (RDKLIHAY) is the RX(4)HXY motif element. Y82 carries the O-di-AMP-tyrosine modification.

The protein belongs to the HepT RNase toxin family. In terms of processing, modified by cognate antitoxin MntA; probably at least 2 successive AMPylation events occur on Tyr-82.

Functionally, toxic component of a type VII toxin-antitoxin (TA) system. Overexpression in E.coli inhibits cell growth. Neutralized by cognate antitoxin MntA. Neutralization is probably due to AMPylation by MntA. Probably an RNAase. The protein is Probable ribonuclease HepT of Thermococcus cleftensis (strain DSM 27260 / KACC 17922 / CL1).